The following is a 234-amino-acid chain: Orotidine 5'-phosphate decarboxylase (234 aa).

Substrate-binding positions include D11, K33, 60–69, T120, R181, Q190, G210, and R211; that span reads DLKFHDIPNT. Residue K62 is the Proton donor of the active site.

Belongs to the OMP decarboxylase family. Type 1 subfamily. As to quaternary structure, homodimer.

The catalysed reaction is orotidine 5'-phosphate + H(+) = UMP + CO2. Its pathway is pyrimidine metabolism; UMP biosynthesis via de novo pathway; UMP from orotate: step 2/2. In terms of biological role, catalyzes the decarboxylation of orotidine 5'-monophosphate (OMP) to uridine 5'-monophosphate (UMP). This is Orotidine 5'-phosphate decarboxylase from Aliivibrio salmonicida (strain LFI1238) (Vibrio salmonicida (strain LFI1238)).